Here is a 197-residue protein sequence, read N- to C-terminus: Segregation and condensation protein B (197 aa).

The protein belongs to the ScpB family. In terms of assembly, homodimer. Homodimerization may be required to stabilize the binding of ScpA to the Smc head domains. Component of a cohesin-like complex composed of ScpA, ScpB and the Smc homodimer, in which ScpA and ScpB bind to the head domain of Smc. The presence of the three proteins is required for the association of the complex with DNA.

It localises to the cytoplasm. In terms of biological role, participates in chromosomal partition during cell division. May act via the formation of a condensin-like complex containing Smc and ScpA that pull DNA away from mid-cell into both cell halves. The polypeptide is Segregation and condensation protein B (Bacillus pumilus (strain SAFR-032)).